A 296-amino-acid chain; its full sequence is 3-methyl-2-oxobutanoate hydroxymethyltransferase (296 aa).

Residues 1–14 (MTAPTPTPANAATP) are compositionally biased toward low complexity. The segment at 1–29 (MTAPTPTPANAATPYGTLPPASPLPQRRP) is disordered. Mg(2+)-binding residues include D71 and D114. 3-methyl-2-oxobutanoate-binding positions include 71–72 (DS), D114, and K143. E145 contributes to the Mg(2+) binding site. E212 functions as the Proton acceptor in the catalytic mechanism.

This sequence belongs to the PanB family. In terms of assembly, homodecamer; pentamer of dimers. Requires Mg(2+) as cofactor.

Its subcellular location is the cytoplasm. The enzyme catalyses 3-methyl-2-oxobutanoate + (6R)-5,10-methylene-5,6,7,8-tetrahydrofolate + H2O = 2-dehydropantoate + (6S)-5,6,7,8-tetrahydrofolate. Its pathway is cofactor biosynthesis; (R)-pantothenate biosynthesis; (R)-pantoate from 3-methyl-2-oxobutanoate: step 1/2. Catalyzes the reversible reaction in which hydroxymethyl group from 5,10-methylenetetrahydrofolate is transferred onto alpha-ketoisovalerate to form ketopantoate. In Paracidovorax citrulli (strain AAC00-1) (Acidovorax citrulli), this protein is 3-methyl-2-oxobutanoate hydroxymethyltransferase.